A 114-amino-acid polypeptide reads, in one-letter code: MKASYLVLIFISIFSMAQASSLSSYIVTFPKTDNMATDQNSIIEDVKKYVVDIGGKITHEYSLIKGFTVDLPDSDQILDGLKERLSYIESEYGAKCNLEKDSEVHALNRDHLVA.

The signal sequence occupies residues 1–19; that stretch reads MKASYLVLIFISIFSMAQA. At Ser-41 the chain carries Phosphoserine.

The protein belongs to the protease inhibitor I9 family.

This is an uncharacterized protein from Saccharomyces cerevisiae (strain ATCC 204508 / S288c) (Baker's yeast).